The chain runs to 361 residues: MRGQRSLLLGPARLCLRLLLLLGYRRRCPPLLRGLVQRWRYGKVCLRSLLYNSFGGSDTAVDAAFEPVYWLVDNVIRWFGVVFVVLVIVLTGSIVAIAYLCVLPLILRTYSVPRLCWHFFYSHWNLILIVFHYYQAITTPPGYPPQGRNDIATVSICKKCIYPKPARTHHCSICNRCVLKMDHHCPWLNNCVGHYNHRYFFSFCFFMTLGCVYCSYGSWDLFREAYAAIETYHQTPPPTFSFRERITHKSLVYLWFLCSSVALALGALTMWHAVLISRGETSIERHINKKERRRLQAKGRVFRNPYNYGCLDNWKVFLGVDTGRHWLTRVLLPSSHLPHGNGMSWDPPPWVTAHSASVMAV.

At 1 to 77 (MRGQRSLLLG…VYWLVDNVIR (77 aa)) the chain is on the cytoplasmic side. Residues 78 to 98 (WFGVVFVVLVIVLTGSIVAIA) traverse the membrane as a helical segment. The Lumenal segment spans residues 99–116 (YLCVLPLILRTYSVPRLC). The helical transmembrane segment at 117 to 137 (WHFFYSHWNLILIVFHYYQAI) threads the bilayer. The Cytoplasmic segment spans residues 138–198 (TTPPGYPPQG…NNCVGHYNHR (61 aa)). Residues 155–205 (SICKKCIYPKPARTHHCSICNRCVLKMDHHCPWLNNCVGHYNHRYFFSFCF) form the DHHC domain. Cys-185 acts as the S-palmitoyl cysteine intermediate in catalysis. Residues 199 to 219 (YFFSFCFFMTLGCVYCSYGSW) form a helical membrane-spanning segment. At 220-250 (DLFREAYAAIETYHQTPPPTFSFRERITHKS) the chain is on the lumenal side. The chain crosses the membrane as a helical span at residues 251 to 271 (LVYLWFLCSSVALALGALTMW). Topologically, residues 272-361 (HAVLISRGET…TAHSASVMAV (90 aa)) are cytoplasmic.

The protein belongs to the DHHC palmitoyltransferase family. As to quaternary structure, interacts with ABL1. Interacts with COPS5. Ubiquitously expressed.

The protein resides in the endoplasmic reticulum membrane. The enzyme catalyses L-cysteinyl-[protein] + hexadecanoyl-CoA = S-hexadecanoyl-L-cysteinyl-[protein] + CoA. Palmitoyl acyltransferase that mediates palmitoylation of proteins such as PLN and ZDHHC6. Required during embryonic heart development and cardiac function, possibly by mediating palmitoylation of PLN, thereby affecting PLN phosphorylation and homooligomerization. Also required for eye development. Palmitoylates ZDHHC6, affecting the quaternary assembly of ZDHHC6, its localization, stability and function. May play a role in DNA damage response. May be involved in apoptosis regulation. Involved in the proliferation of neural stem cells by regulating the FGF/ERK pathway. This chain is Palmitoyltransferase ZDHHC16, found in Mus musculus (Mouse).